The following is a 291-amino-acid chain: Sesquiterpene cyclase astC (291 aa).

It belongs to the HAD-like hydrolase superfamily.

It catalyses the reaction (2E,6E)-farnesyl diphosphate = (S,S)-drim-8-en-11-yl diphosphate. It functions in the pathway secondary metabolite biosynthesis; terpenoid biosynthesis. Sesquiterpene cyclase; part of the gene cluster that mediates the biosynthesis of astellolides, drimane-type sesquiterpene esters that show antimicrobial, anti-inflammatory, and anti-tumor activities. The first step in astellolide biosynthesis is performed by the sesquiterpene cyclase astC that catalyzes the formation of drimanyl pyrophosphate from farnesyl pyrophosphate. Drimanyl pyrophosphate is then dephosphorylated by the sesquiterpene phosphatase astI to produce drimanyl monophosphate which is further dephosphorylated to drim-8-ene-11-ol by atsK. Drim-8-ene-11-ol is converted to confertifolin, probably by the cytochrome P450 monooxygenase astD and/or the dehydrogenase astE. The cytochrome P450 monooxygenases astB, astF and astJ then hydroxylate confertifolin at C6, C14, or C15 to form trihydroxy confertifolin. The nonribosomal peptide synthetase astA catalyzes ester bond formation between trihydroxy contifolin and benzoic acid (BA) or 4-hydroxy benzoic acid (4HBA), leading to the formation of dideacetyl astellolides A and B, respectively. Finally, the O-acetyltransferase astG converts dideacetyl astellolides A and B into deacetyl astellolides A and B. This Aspergillus oryzae (strain ATCC 42149 / RIB 40) (Yellow koji mold) protein is Sesquiterpene cyclase astC.